Here is a 457-residue protein sequence, read N- to C-terminus: Polygalacturonase-2 (457 aa).

A signal peptide spans 1 to 24 (MVIQRNSILLLIIIFASSISTCRS). The propeptide occupies 25-71 (NVIDDNLFKQVYDNILEQEFAHDFQAYLSYLSKNIESNNNIDKVDKN). Asparagine 189 and asparagine 240 each carry an N-linked (GlcNAc...) asparagine glycan. 2 PbH1 repeats span residues 228 to 255 (SCTN…HVSN) and 256 to 277 (TQYI…SIVS). Residue aspartate 270 is the Proton donor of the active site. An N-linked (GlcNAc...) asparagine glycan is attached at asparagine 286. Residue histidine 293 is part of the active site. PbH1 repeat units lie at residues 309–330 (VSNV…RIKT) and 338–359 (ASNI…IIDQ). Asparagine 311 carries an N-linked (GlcNAc...) asparagine glycan. Positions 445–457 (LEISEDEALLYNY) are excised as a propeptide.

It belongs to the glycosyl hydrolase 28 family. As to quaternary structure, monomer PG2 (isoenzymes PG2A and PG2B). Also forms heterodimers called polygalacturonase 1 (PG1) with the beta subunit GP1. In terms of processing, N-glycosylated. PG2B isozyme has a greater degree of glycosylation than PG2A. In terms of tissue distribution, expressed only in ripening fruits (at protein level).

Its subcellular location is the secreted. It is found in the extracellular space. The protein resides in the apoplast. The protein localises to the cell wall. It catalyses the reaction (1,4-alpha-D-galacturonosyl)n+m + H2O = (1,4-alpha-D-galacturonosyl)n + (1,4-alpha-D-galacturonosyl)m.. Catalytic subunit of the polygalacturonase isozyme 1 and 2 (PG1 and PG2). Acts in concert with the pectinesterase, in the ripening process. Is involved in cell wall metabolism, specifically in polyuronide degradation. The depolymerization and solubilization of cell wall polyuronides mediated by PG2 during ripening seems to be limited by the beta subunit GP1, probably by recruiting PG2 to form PG1. This chain is Polygalacturonase-2 (PG2), found in Solanum lycopersicum (Tomato).